Reading from the N-terminus, the 519-residue chain is Transcription factor STP1 (519 aa).

Residues 16 to 35 (IPGKIYAFFRELVSGVIISK) form an i region. Residues 47–61 (ATKEEGKDAADEEKT) show a composition bias toward basic and acidic residues. Disordered regions lie at residues 47–69 (ATKE…FPES) and 115–150 (LLGS…EHST). The tract at residues 65–97 (LFPESNNIDRSLNGGCSVIPCSMDVSDLNTPIS) is II. Over residues 131-146 (STGVTSSPLSPSGSTP) the composition is skewed to low complexity. A C2H2-type 1 zinc finger spans residues 160–182 (FICHYCDATFRIRGYLTRHIKKH). The segment at 188–223 (YHCPFFNSATPPDLRCHNSGGFSRRDTYKTHLKARH) adopts a C2H2-type 2; atypical zinc-finger fold. The segment at 240 to 265 (GHCAQCGEYFSTIENFVENHIESGDC) adopts a C2H2-type 3; atypical zinc-finger fold. Residues 357–382 (IKKKQQQVSGSTVTTPEVATQNNQEV) are disordered. The segment covering 364–381 (VSGSTVTTPEVATQNNQE) has biased composition (polar residues).

In terms of assembly, interacts (via Region II) with SSY5; protease component of the SPS-sensor. Phosphorylated by casein kinase I. Phosphorylation is not dependent on the extracellular amino acid levels, but is a prerequisite for proteolytic processing. In terms of processing, activated by the amino acid-induced proteolytic removal of an N-terminal inhibitory domain by serine protease SSY5, an intrinsic component of the SPS-sensor. Processing requires at least 2 components of the SCF(GRR1) ubiquitin ligase complex, namely the F-box protein GRR1 and the E2 enzyme CDC34, but does not depend on the proteasome. Processing is negatively regulated by the protein phosphatase 2A regulatory subunit RTS1.

The protein resides in the cell membrane. Its subcellular location is the nucleus. Functionally, transcription factor involved in the regulation of gene expression in response to extracellular amino acid levels. Synthesized as latent cytoplasmic precursor, which, upon a signal initiated by the plasma membrane SPS (SSY1-PTR3-SSY5) amino acid sensor system, becomes proteolytically activated and relocates to the nucleus, where it induces the expression of SPS-sensor-regulated genes, including the amino-acid permeases AGP1, BAP2, BAP3 and GNP1. Binding to promoters is facilitated by DAL81. Involved in the repression of genes subject to nitrogen catabolite repression and genes involved in stress response. Negatively regulated by inner nuclear membrane proteins ASI1, ASI2 and ASI3, which prevent unprocessed precursor forms that escape cytoplasmic anchoring from inducing SPS-sensor-regulated genes. May be involved in pre-tRNA splicing. The chain is Transcription factor STP1 (STP1) from Saccharomyces cerevisiae (strain RM11-1a) (Baker's yeast).